Here is a 77-residue protein sequence, read N- to C-terminus: Apelin (77 aa).

The N-terminal stretch at 1–22 (MNLSFCVQALLLLWLSLTAVCG) is a signal peptide. Residues 23–41 (VPLMLPPDGKGLEEGNMRY) constitute a propeptide that is removed on maturation. Positions 45 to 77 (PRTSRTGPGAWQGGRRKFRRQRPRLSHKGPMPF) are disordered. The segment covering 58-71 (GRRKFRRQRPRLSH) has biased composition (basic residues).

Belongs to the apelin family. Post-translationally, several active peptides may be produced by proteolytic processing of the peptide precursor. As to expression, expressed in the lung, testis, ovary, uterus and mammary gland. Expressed in neurons in the thalamic paraventricular and hypothalamic supraoptic nuclei. The lung, testis and uterus mainly contain a large form that looks like apelin-36, whereas the mammary gland seems to contain 2 forms of apelin, a large form close to apelin-36 and a small form close to apelin-13 (at protein level). Widely expressed in the adult, with highest levels in the mammary gland of lactating animals, very high levels in the lung, intermediate levels in the spinal cord, ovary, adipose tissue, brain (neuronal cell bodies and fibers in the supraoptic and the paraventricular nuclei), heart and testis, and lowest levels in the pituitary gland, kidney, stomach, uterus and pancreas.

The protein resides in the secreted. Its subcellular location is the extracellular space. Its function is as follows. Peptide hormone that functions as endogenous ligand for the G-protein-coupled apelin receptor (APLNR/APJ), that plays a role in cadiovascular homeostasis. Functions as a balanced agonist activating both G(i) protein pathway and beta-arrestin pathway of APLNR. Downstream G proteins activation, apelin can inhibit cAMP production and activate key intracellular effectors such as ERKs. On the other hand, APLNR activation induces beta-arrestin recruitment to the membrane leading to desensitization and internalization of the receptor. Apelin blunts cardiac hypertrophic induction from APLNR on response to pathological stimuli, but also induces myocardial hypertrophy under normal conditions. Apelin-36 dissociates more hardly than (pyroglu)apelin-13 from APLNR. Involved in the regulation of cardiac precursor cell movements during gastrulation and heart morphogenesis. Has an inhibitory effect on cytokine production in response to T-cell receptor/CD3 cross-linking; the oral intake of apelin in the colostrum and the milk might therefore modulate immune responses in neonates. Plays a role in early coronary blood vessels formation. Mediates myocardial contractility in an ERK1/2-dependent manner. May also have a role in the central control of body fluid homeostasis by influencing vasopressin release and drinking behavior. The sequence is that of Apelin from Rattus norvegicus (Rat).